Consider the following 890-residue polypeptide: Kinesin-like protein KIN-7C, mitochondrial (890 aa).

A compositionally biased stretch (polar residues) spans Met1 to Ser13. A disordered region spans residues Met1 to Ala66. Residues Met1–Lys73 constitute a mitochondrion transit peptide. The span at Ser40–Ala66 shows a compositional bias: low complexity. Residues Asn75 to Val394 enclose the Kinesin motor domain. Residue Gly155–Thr162 coordinates ATP. A coiled-coil region spans residues Glu395 to Leu468. The interval Asp511–Ile595 is disordered. A compositionally biased stretch (low complexity) spans Ser569–Ser579. 2 coiled-coil regions span residues His664–Ile693 and Ala729–Arg765. The tract at residues Thr768–Thr797 is disordered. Residues Asn818–Glu884 are a coiled coil.

The protein belongs to the TRAFAC class myosin-kinesin ATPase superfamily. Kinesin family. KIN-7 subfamily.

The protein localises to the mitochondrion. The protein is Kinesin-like protein KIN-7C, mitochondrial of Arabidopsis thaliana (Mouse-ear cress).